We begin with the raw amino-acid sequence, 306 residues long: Pantothenate kinase (306 aa).

90-97 (GSVAVGKS) contacts ATP.

Belongs to the prokaryotic pantothenate kinase family.

It localises to the cytoplasm. The enzyme catalyses (R)-pantothenate + ATP = (R)-4'-phosphopantothenate + ADP + H(+). Its pathway is cofactor biosynthesis; coenzyme A biosynthesis; CoA from (R)-pantothenate: step 1/5. This Lactococcus lactis subsp. cremoris (strain SK11) protein is Pantothenate kinase.